Reading from the N-terminus, the 289-residue chain is ATP synthase gamma chain (289 aa).

Belongs to the ATPase gamma chain family. As to quaternary structure, F-type ATPases have 2 components, CF(1) - the catalytic core - and CF(0) - the membrane proton channel. CF(1) has five subunits: alpha(3), beta(3), gamma(1), delta(1), epsilon(1). CF(0) has three main subunits: a, b and c.

The protein localises to the cell membrane. Its function is as follows. Produces ATP from ADP in the presence of a proton gradient across the membrane. The gamma chain is believed to be important in regulating ATPase activity and the flow of protons through the CF(0) complex. The protein is ATP synthase gamma chain of Lactococcus lactis subsp. lactis (strain IL1403) (Streptococcus lactis).